A 695-amino-acid chain; its full sequence is Pre-mRNA-splicing factor clf-1 (695 aa).

HAT repeat units lie at residues glutamate 52–glutamate 84, lysine 86–lysine 118, arginine 120–methionine 152, glycine 154–arginine 185, glycine 187–glutamate 218, glycine 220–arginine 259, arginine 261–glutamine 295, valine 305–serine 337, glycine 339–phenylalanine 373, lysine 383–arginine 419, glycine 421–lysine 452, tyrosine 454–glycine 486, aspartate 488–glutamate 522, glycine 524–asparagine 555, glutamate 578–threonine 616, and glutamate 621–proline 654.

Belongs to the crooked-neck family. In terms of assembly, associated with the spliceosome.

It localises to the nucleus. In terms of biological role, involved in pre-mRNA splicing and cell cycle progression. Required for the spliceosome assembly and initiation of the DNA replication. The polypeptide is Pre-mRNA-splicing factor clf-1 (clf-1) (Neurospora crassa (strain ATCC 24698 / 74-OR23-1A / CBS 708.71 / DSM 1257 / FGSC 987)).